We begin with the raw amino-acid sequence, 445 residues long: Phosphoglucosamine mutase (445 aa).

Serine 102 acts as the Phosphoserine intermediate in catalysis. Serine 102, aspartate 241, aspartate 243, and aspartate 245 together coordinate Mg(2+). Position 102 is a phosphoserine (serine 102).

It belongs to the phosphohexose mutase family. Mg(2+) is required as a cofactor. Activated by phosphorylation.

The enzyme catalyses alpha-D-glucosamine 1-phosphate = D-glucosamine 6-phosphate. In terms of biological role, catalyzes the conversion of glucosamine-6-phosphate to glucosamine-1-phosphate. This chain is Phosphoglucosamine mutase, found in Aliivibrio fischeri (strain ATCC 700601 / ES114) (Vibrio fischeri).